The following is a 1135-amino-acid chain: uncharacterized protein (1135 aa).

The N-terminal stretch at 1 to 28 is a signal peptide; it reads MALFPRGILIALVLSFVLNLGLVTKIHA. The next 7 membrane-spanning stretches (helical) occupy residues 332–352, 359–379, 393–413, 495–515, 522–542, 555–575, and 700–720; these read IVTA…LLAG, EYIN…GINI, MIQW…NWVM, MLVS…AFMV, MISI…FLFA, MISF…MFAV, and IKNI…MYNF.

The protein belongs to the TrbL/VirB6 family.

The protein localises to the cell membrane. This is an uncharacterized protein from Rickettsia typhi (strain ATCC VR-144 / Wilmington).